A 456-amino-acid polypeptide reads, in one-letter code: Phosphomethylpyrimidine synthase (456 aa).

Substrate contacts are provided by residues Asn-80, Met-109, Tyr-139, His-175, 195–197 (SRG), 236–239 (DSLR), and Glu-275. A Zn(2+)-binding site is contributed by His-279. Position 302 (Tyr-302) interacts with substrate. His-343 contacts Zn(2+). [4Fe-4S] cluster is bound by residues Cys-423, Cys-426, and Cys-431.

It belongs to the ThiC family. It depends on [4Fe-4S] cluster as a cofactor.

It catalyses the reaction 5-amino-1-(5-phospho-beta-D-ribosyl)imidazole + S-adenosyl-L-methionine = 4-amino-2-methyl-5-(phosphooxymethyl)pyrimidine + CO + 5'-deoxyadenosine + formate + L-methionine + 3 H(+). The protein operates within cofactor biosynthesis; thiamine diphosphate biosynthesis. Its function is as follows. Catalyzes the synthesis of the hydroxymethylpyrimidine phosphate (HMP-P) moiety of thiamine from aminoimidazole ribotide (AIR) in a radical S-adenosyl-L-methionine (SAM)-dependent reaction. The protein is Phosphomethylpyrimidine synthase of Synechococcus elongatus (strain ATCC 33912 / PCC 7942 / FACHB-805) (Anacystis nidulans R2).